The following is a 213-amino-acid chain: Ribosome maturation factor RimM (213 aa).

The region spanning 99–175 (DQDAAYISDL…RITMRLPEGL (77 aa)) is the PRC barrel domain. The interval 182–213 (TATAREPRARRTRKRGLRKPITGADATPPDSQ) is disordered. A compositionally biased stretch (basic residues) spans 189 to 199 (RARRTRKRGLR).

It belongs to the RimM family. In terms of assembly, binds ribosomal protein uS19.

It localises to the cytoplasm. In terms of biological role, an accessory protein needed during the final step in the assembly of 30S ribosomal subunit, possibly for assembly of the head region. Essential for efficient processing of 16S rRNA. May be needed both before and after RbfA during the maturation of 16S rRNA. It has affinity for free ribosomal 30S subunits but not for 70S ribosomes. The sequence is that of Ribosome maturation factor RimM from Acidobacterium capsulatum (strain ATCC 51196 / DSM 11244 / BCRC 80197 / JCM 7670 / NBRC 15755 / NCIMB 13165 / 161).